We begin with the raw amino-acid sequence, 583 residues long: Radixin (583 aa).

In terms of domain architecture, FERM spans 5–295; that stretch reads INVRVTTMDA…GNHELYMRRR (291 aa). A 1,2-diacyl-sn-glycero-3-phospho-(1D-myo-inositol) contacts are provided by residues 60–63 and K278; that span reads KLNK. 2 disordered regions span residues 310-336 and 436-527; these read REEK…AEKE and KKKE…VKKQ. Basic and acidic residues-rich tracts occupy residues 436 to 447 and 455 to 464; these read KKKEEEASEWQH and DLEKTKEELK. Residues 469 to 480 show a composition bias toward pro residues; that stretch reads APPPPPPPPVIP. Composition is skewed to basic and acidic residues over residues 483-492 and 506-525; these read ENEHDEHDEN and MNHR…ERVK.

Its subcellular location is the cell membrane. It is found in the cytoplasm. The protein resides in the cytoskeleton. Functionally, probably plays a crucial role in the binding of the barbed end of actin filaments to the plasma membrane. In Gallus gallus (Chicken), this protein is Radixin (RDX).